Here is a 678-residue protein sequence, read N- to C-terminus: ABC transporter F family member 2 (678 aa).

ABC transporter domains are found at residues 84 to 342 and 411 to 626; these read VRLE…EAQY and VTVK…AREL. ATP contacts are provided by residues 116–123 and 443–450; these read GVNGAGKT and GPNGCGKS. Residues 630 to 678 form a disordered region; that stretch reads AELEEKAPKVKAKSKMSKAEREARKKQKMKAFQASKKKSKSSKNAKRWN. Basic residues predominate over residues 653–678; it reads RKKQKMKAFQASKKKSKSSKNAKRWN.

It belongs to the ABC transporter superfamily. ABCF family. EF3 (TC 3.A.1.121) subfamily.

This chain is ABC transporter F family member 2 (ABCF2), found in Arabidopsis thaliana (Mouse-ear cress).